Consider the following 240-residue polypeptide: Small ribosomal subunit protein uS3 (240 aa).

The 72-residue stretch at 21 to 92 (LNEFFTRELA…TIVLYAERVQ (72 aa)) folds into the KH type-2 domain. Phosphothreonine occurs at positions 44 and 70. Residue Ser97 is modified to Phosphoserine. A Glycyl lysine isopeptide (Lys-Gly) (interchain with G-Cter in ubiquitin) cross-link involves residue Lys106. Ser129 is modified (phosphoserine). Residues Lys132 and Lys141 each participate in a glycyl lysine isopeptide (Lys-Gly) (interchain with G-Cter in ubiquitin) cross-link. Arg146 bears the Omega-N-methylarginine; by SFM1 mark. Residues Lys151, Lys200, and Lys212 each participate in a glycyl lysine isopeptide (Lys-Gly) (interchain with G-Cter in ubiquitin) cross-link. The disordered stretch occupies residues 212–240 (KEEEPILAPSVKDYRPAEETEAQAEPVEA). Ser221 is modified (phosphoserine). The span at 230–240 (ETEAQAEPVEA) shows a compositional bias: acidic residues. A Phosphothreonine modification is found at Thr231.

Belongs to the universal ribosomal protein uS3 family. Component of the small ribosomal subunit (SSU). Mature yeast ribosomes consist of a small (40S) and a large (60S) subunit. The 40S small subunit contains 1 molecule of ribosomal RNA (18S rRNA) and 33 different proteins (encoded by 57 genes). The large 60S subunit contains 3 rRNA molecules (25S, 5.8S and 5S rRNA) and 46 different proteins (encoded by 81 genes). Ubiquitinated at Lys-212 in response to stalled ribosomes. Ubiquitination leads to activation of the No-Go Decay (NGD) pathway and degradation of non-functional 18S rRNA: first monoubiquitinated at Lys-212 by MAG2, followed by formation of 'Lys-63'-linked polyubiquitin chains on monoubiquitin by HEL2 and RSP5.

It is found in the cytoplasm. Component of the ribosome, a large ribonucleoprotein complex responsible for the synthesis of proteins in the cell. The small ribosomal subunit (SSU) binds messenger RNAs (mRNAs) and translates the encoded message by selecting cognate aminoacyl-transfer RNA (tRNA) molecules. The large subunit (LSU) contains the ribosomal catalytic site termed the peptidyl transferase center (PTC), which catalyzes the formation of peptide bonds, thereby polymerizing the amino acids delivered by tRNAs into a polypeptide chain. The nascent polypeptides leave the ribosome through a tunnel in the LSU and interact with protein factors that function in enzymatic processing, targeting, and the membrane insertion of nascent chains at the exit of the ribosomal tunnel. The polypeptide is Small ribosomal subunit protein uS3 (Saccharomyces cerevisiae (strain ATCC 204508 / S288c) (Baker's yeast)).